Reading from the N-terminus, the 406-residue chain is Dematin (406 aa).

Disordered regions lie at residues 1–30 (MERLQKQPLTSPGSVSSSRDSSVPGSPSSI) and 78–333 (LPRS…DRGN). Residues 11-29 (SPGSVSSSRDSSVPGSPSS) are compositionally biased toward low complexity. Residues Ser-16, Ser-18, Ser-26, Ser-92, Ser-96, Ser-105, Ser-110, Ser-113, Ser-157, and Ser-227 each carry the phosphoserine modification. Polar residues predominate over residues 105 to 114 (SPGTISQASA). Positions 217–228 (EEEEEEEDDDSG) are enriched in acidic residues. Residues 225-309 (DDSGEEMKAL…SRLQSTDFSP (85 aa)) form an interaction with RASGRF2 region. Basic and acidic residues-rich tracts occupy residues 229–243 (EEMKALRERQREELS) and 253–262 (ILKEEMEKSL). Ser-270, Ser-280, Ser-290, Ser-304, Ser-316, Ser-334, Ser-373, and Ser-384 each carry phosphoserine. Residues 282–323 (HAGTSKSSSLPAYGRTTLSRLQSTDFSPSGSEAESPGLQNGE) show a composition bias toward polar residues. In terms of domain architecture, HP spans 338 to 406 (VLEQKIYPYE…NELKKKASLF (69 aa)). Ser-404 carries the post-translational modification Phosphoserine; by PKA.

The protein belongs to the villin/gelsolin family. Monomeric; under reducing conditions. Self-associates. Exists under oxidizing condition as a trimer linked by disulfide bonds. Found in a complex with DMTN, F-actin and spectrin. Found in a complex with ADD2, DMTN and SLC2A1. Interacts with F-actin, ITPKB and spectrin. Interacts with SLC2A1 (via C-terminus cytoplasmic region). Interacts with RASGRF2. In terms of processing, phosphorylated. Phosphorylation at Ser-404 by PKA causes the C-terminal headpiece domain to associate with the N-terminal core domain, and leads to the inhibition of its actin bundling activity.

The protein localises to the cytoplasm. It is found in the cytosol. The protein resides in the perinuclear region. It localises to the cytoskeleton. Its subcellular location is the cell membrane. The protein localises to the membrane. It is found in the endomembrane system. The protein resides in the cell projection. Its function is as follows. Membrane-cytoskeleton-associated protein with F-actin-binding activity that induces F-actin bundles formation and stabilization. Its F-actin-bundling activity is reversibly regulated upon its phosphorylation by the cAMP-dependent protein kinase A (PKA). Binds to the erythrocyte membrane glucose transporter-1 SLC2A1/GLUT1, and hence stabilizes and attaches the spectrin-actin network to the erythrocytic plasma membrane. Plays a role in maintaining the functional integrity of PKA-activated erythrocyte shape and the membrane mechanical properties. Also plays a role as a modulator of actin dynamics in fibroblasts; acts as a negative regulator of the RhoA activation pathway. In platelets, functions as a regulator of internal calcium mobilization across the dense tubular system that affects platelet granule secretion pathways and aggregation. Also required for the formation of a diverse set of cell protrusions, such as filopodia and lamellipodia, necessary for platelet cell spreading, motility and migration. Acts as a tumor suppressor and inhibits malignant cell transformation. The polypeptide is Dematin (DMTN) (Bos taurus (Bovine)).